We begin with the raw amino-acid sequence, 600 residues long: Probable tripeptidyl-peptidase SED4 (600 aa).

Positions 1 to 22 are cleaved as a signal peptide; sequence MVSFTLRAIGACLIGLPALITA. A propeptide spans 23 to 202 (removed in mature form); it reads APTSHVSNDF…SVFTSDLEIT (180 aa). 2 N-linked (GlcNAc...) asparagine glycosylation sites follow: Asn210 and Asn281. The Peptidase S53 domain maps to 212 to 600; it reads TITPDCIREL…FEKLSKLVLI (389 aa). Residues Glu288 and Asp292 each act as charge relay system in the active site. Asn323 and Asn404 each carry an N-linked (GlcNAc...) asparagine glycan. Ser504 acts as the Charge relay system in catalysis. Ca(2+)-binding residues include Asp546 and Ile547. Residue Asn575 is glycosylated (N-linked (GlcNAc...) asparagine). Residues Gly579 and Asp581 each contribute to the Ca(2+) site.

Ca(2+) serves as cofactor.

It is found in the secreted. It localises to the extracellular space. The enzyme catalyses Release of an N-terminal tripeptide from a polypeptide.. Secreted tripeptidyl-peptidase which degrades proteins at acidic pHs and is involved in virulence. The chain is Probable tripeptidyl-peptidase SED4 (SED4) from Arthroderma benhamiae (strain ATCC MYA-4681 / CBS 112371) (Trichophyton mentagrophytes).